The following is a 509-amino-acid chain: uncharacterized protein (509 aa).

The 118-residue stretch at 108-225 (GKSSLCNLLA…KRHKPLFPVI (118 aa)) folds into the G domain.

This is an uncharacterized protein from Acinetobacter baylyi (strain ATCC 33305 / BD413 / ADP1).